The sequence spans 29 residues: Small toxic protein ZorO (29 aa).

Residues 10–27 (VLIAVLELLVALLRLIDL) traverse the membrane as a helical segment.

Its subcellular location is the cell inner membrane. Toxic component of a type I toxin-antitoxin (TA) system. Expression in the absence of its cognate antitoxin (small sRNA orzO) leads to cell stasis and a decrease in colony-forming units. Repression of ZorO toxicity requires base pairing between zorO mRNA and sRNA OrzO, as well as RNase III (rnc), suggesting the mRNA is degraded. Base pairing occurs between 18 bases in the 5' UTR of zorO mRNA and the 5' end of OrzO sRNA. sRNA OrzP, which differs only in 4 of these 18 bases, does not repress ZorO toxicity. Integration of the protein into the inner membrane damages membrane integrity and affects membrane potential. It leads to increased levels of hydroxyl radicals. This Escherichia coli O157:H7 protein is Small toxic protein ZorO.